Reading from the N-terminus, the 354-residue chain is MATTAASSLLKSSFAGSRLPSATRTTTPSSVAVATPRAGGGPIRASISSPNPPYDLTSFRFSPIKESIVSREMTRRYMTDMITHADTDVVIVGAGSAGLSCAYELSKDPTVSVAIVEQSVSPGGGAWLGGQLFSAMVVRRPAHLFLDELGVGYDEAEDYVVVKHAALFTSTVMSRLLARPNVKLFNAVAVEDLIVRRGRVGGVVTNWALVSMNHDTQSCMDPNVMEAKVVVSSCGHDGPFGATGVKRLQDIGMISAVPGMKALDMNAAEDEIVRLTREVVPGMIVTGMEVAEIDGAPRMGPTFGAMMISGQKAAHLALKALGRPNAVDGTIPEVSPALREEFVIASKDDEVVDA.

Residues 1–44 (MATTAASSLLKSSFAGSRLPSATRTTTPSSVAVATPRAGGGPIR) constitute a chloroplast transit peptide. Positions 17-49 (SRLPSATRTTTPSSVAVATPRAGGGPIRASISS) are disordered. Residues 20 to 32 (PSATRTTTPSSVA) show a composition bias toward polar residues. Substrate contacts are provided by residues alanine 97, 117–118 (EQ), glycine 125, and valine 190. The residue at position 219 (cysteine 219) is a 2,3-didehydroalanine (Cys). Residues aspartate 221, histidine 236, methionine 288, and 298-300 (RMG) contribute to the substrate site.

Belongs to the THI4 family. In terms of assembly, homooctamer. It depends on Fe cation as a cofactor. In terms of processing, during the catalytic reaction, a sulfide is transferred from Cys-219 to a reaction intermediate, generating a dehydroalanine residue. In terms of tissue distribution, highest expression in developing embryos and green leaves and a very low level expression seen in endosperm, roots, etiolated shoots and immature ears.

It is found in the plastid. It localises to the chloroplast. The catalysed reaction is [ADP-thiazole synthase]-L-cysteine + glycine + NAD(+) = [ADP-thiazole synthase]-dehydroalanine + ADP-5-ethyl-4-methylthiazole-2-carboxylate + nicotinamide + 3 H2O + 2 H(+). In terms of biological role, involved in biosynthesis of the thiamine precursor thiazole. Catalyzes the conversion of NAD and glycine to adenosine diphosphate 5-(2-hydroxyethyl)-4-methylthiazole-2-carboxylic acid (ADT), an adenylated thiazole intermediate. The reaction includes an iron-dependent sulfide transfer from a conserved cysteine residue of the protein to a thiazole intermediate. The enzyme can only undergo a single turnover, which suggests it is a suicide enzyme. May have additional roles in adaptation to various stress conditions and in DNA damage tolerance. The chain is Thiamine thiazole synthase 2, chloroplastic from Zea mays (Maize).